Here is a 77-residue protein sequence, read N- to C-terminus: NAD(P)H-quinone oxidoreductase subunit L (77 aa).

2 consecutive transmembrane segments (helical) span residues 12–32 and 47–67; these read LIAYMGVITIYLLVIPLLLFY and LGIYGLVFLFFPGLILFSPFL.

Belongs to the complex I NdhL subunit family. As to quaternary structure, NDH-1 can be composed of about 15 different subunits; different subcomplexes with different compositions have been identified which probably have different functions.

It localises to the cellular thylakoid membrane. It catalyses the reaction a plastoquinone + NADH + (n+1) H(+)(in) = a plastoquinol + NAD(+) + n H(+)(out). The enzyme catalyses a plastoquinone + NADPH + (n+1) H(+)(in) = a plastoquinol + NADP(+) + n H(+)(out). Its function is as follows. NDH-1 shuttles electrons from an unknown electron donor, via FMN and iron-sulfur (Fe-S) centers, to quinones in the respiratory and/or the photosynthetic chain. The immediate electron acceptor for the enzyme in this species is believed to be plastoquinone. Couples the redox reaction to proton translocation, and thus conserves the redox energy in a proton gradient. Cyanobacterial NDH-1 also plays a role in inorganic carbon-concentration. The protein is NAD(P)H-quinone oxidoreductase subunit L of Prochlorococcus marinus (strain MIT 9312).